Consider the following 258-residue polypeptide: tRNA pseudouridine synthase A (258 aa).

The Nucleophile role is filled by aspartate 52. Tyrosine 110 contributes to the substrate binding site.

The protein belongs to the tRNA pseudouridine synthase TruA family. As to quaternary structure, homodimer.

It carries out the reaction uridine(38/39/40) in tRNA = pseudouridine(38/39/40) in tRNA. Formation of pseudouridine at positions 38, 39 and 40 in the anticodon stem and loop of transfer RNAs. The chain is tRNA pseudouridine synthase A from Francisella tularensis subsp. novicida (strain U112).